Here is a 71-residue protein sequence, read N- to C-terminus: Exodeoxyribonuclease 7 small subunit (71 aa).

It belongs to the XseB family. Heterooligomer composed of large and small subunits.

It is found in the cytoplasm. The enzyme catalyses Exonucleolytic cleavage in either 5'- to 3'- or 3'- to 5'-direction to yield nucleoside 5'-phosphates.. Bidirectionally degrades single-stranded DNA into large acid-insoluble oligonucleotides, which are then degraded further into small acid-soluble oligonucleotides. The sequence is that of Exodeoxyribonuclease 7 small subunit from Streptococcus suis (strain 98HAH33).